We begin with the raw amino-acid sequence, 251 residues long: Ubiquinone/menaquinone biosynthesis C-methyltransferase UbiE (251 aa).

Residues Thr-74, Asp-95, 123 to 124 (NA), and Ser-140 contribute to the S-adenosyl-L-methionine site.

The protein belongs to the class I-like SAM-binding methyltransferase superfamily. MenG/UbiE family.

It carries out the reaction a 2-demethylmenaquinol + S-adenosyl-L-methionine = a menaquinol + S-adenosyl-L-homocysteine + H(+). The enzyme catalyses a 2-methoxy-6-(all-trans-polyprenyl)benzene-1,4-diol + S-adenosyl-L-methionine = a 5-methoxy-2-methyl-3-(all-trans-polyprenyl)benzene-1,4-diol + S-adenosyl-L-homocysteine + H(+). The protein operates within quinol/quinone metabolism; menaquinone biosynthesis; menaquinol from 1,4-dihydroxy-2-naphthoate: step 2/2. It functions in the pathway cofactor biosynthesis; ubiquinone biosynthesis. In terms of biological role, methyltransferase required for the conversion of demethylmenaquinol (DMKH2) to menaquinol (MKH2) and the conversion of 2-polyprenyl-6-methoxy-1,4-benzoquinol (DDMQH2) to 2-polyprenyl-3-methyl-6-methoxy-1,4-benzoquinol (DMQH2). The sequence is that of Ubiquinone/menaquinone biosynthesis C-methyltransferase UbiE from Proteus mirabilis (strain HI4320).